The chain runs to 293 residues: Phosphatidylserine decarboxylase proenzyme (293 aa).

Catalysis depends on charge relay system; for autoendoproteolytic cleavage activity residues Asp88, His144, and Ser247. Ser247 acts as the Schiff-base intermediate with substrate; via pyruvic acid; for decarboxylase activity in catalysis. Pyruvic acid (Ser); by autocatalysis is present on Ser247.

It belongs to the phosphatidylserine decarboxylase family. PSD-B subfamily. Prokaryotic type I sub-subfamily. In terms of assembly, heterodimer of a large membrane-associated beta subunit and a small pyruvoyl-containing alpha subunit. The cofactor is pyruvate. Post-translationally, is synthesized initially as an inactive proenzyme. Formation of the active enzyme involves a self-maturation process in which the active site pyruvoyl group is generated from an internal serine residue via an autocatalytic post-translational modification. Two non-identical subunits are generated from the proenzyme in this reaction, and the pyruvate is formed at the N-terminus of the alpha chain, which is derived from the carboxyl end of the proenzyme. The autoendoproteolytic cleavage occurs by a canonical serine protease mechanism, in which the side chain hydroxyl group of the serine supplies its oxygen atom to form the C-terminus of the beta chain, while the remainder of the serine residue undergoes an oxidative deamination to produce ammonia and the pyruvoyl prosthetic group on the alpha chain. During this reaction, the Ser that is part of the protease active site of the proenzyme becomes the pyruvoyl prosthetic group, which constitutes an essential element of the active site of the mature decarboxylase.

The protein resides in the cell membrane. It catalyses the reaction a 1,2-diacyl-sn-glycero-3-phospho-L-serine + H(+) = a 1,2-diacyl-sn-glycero-3-phosphoethanolamine + CO2. It participates in phospholipid metabolism; phosphatidylethanolamine biosynthesis; phosphatidylethanolamine from CDP-diacylglycerol: step 2/2. Catalyzes the formation of phosphatidylethanolamine (PtdEtn) from phosphatidylserine (PtdSer). In Xylella fastidiosa (strain 9a5c), this protein is Phosphatidylserine decarboxylase proenzyme.